The primary structure comprises 403 residues: Tyrosine--tRNA ligase (403 aa).

The short motif at 42–51 is the 'HIGH' region element; the sequence is PTAPDLHLGH. Residues 226–230 carry the 'KMSKS' region motif; that stretch reads KMSKS. Lys229 is an ATP binding site. The S4 RNA-binding domain maps to 339 to 400; that stretch reads LRLAGLLTAA…GKRNFARVSL (62 aa).

Belongs to the class-I aminoacyl-tRNA synthetase family. TyrS type 2 subfamily. Homodimer.

The protein localises to the cytoplasm. It carries out the reaction tRNA(Tyr) + L-tyrosine + ATP = L-tyrosyl-tRNA(Tyr) + AMP + diphosphate + H(+). Functionally, catalyzes the attachment of tyrosine to tRNA(Tyr) in a two-step reaction: tyrosine is first activated by ATP to form Tyr-AMP and then transferred to the acceptor end of tRNA(Tyr). The chain is Tyrosine--tRNA ligase from Xanthomonas axonopodis pv. citri (strain 306).